The following is a 409-amino-acid chain: Elongation factor Tu, plastid (409 aa).

Residues 10–214 (KPHINIGTIG…SVDSYIPTPV (205 aa)) form the tr-type G domain. Residues 19–26 (GHVDHGKT) form a G1 region. 19–26 (GHVDHGKT) is a GTP binding site. Residue Thr26 coordinates Mg(2+). Residues 60–64 (GITIN) are G2. The segment at 81–84 (DCPG) is G3. Residues 81 to 85 (DCPGH) and 136 to 139 (NKED) each bind GTP. A G4 region spans residues 136-139 (NKED). The G5 stretch occupies residues 174-176 (SAL).

This sequence belongs to the TRAFAC class translation factor GTPase superfamily. Classic translation factor GTPase family. EF-Tu/EF-1A subfamily.

Its subcellular location is the plastid. It carries out the reaction GTP + H2O = GDP + phosphate + H(+). Its function is as follows. GTP hydrolase that promotes the GTP-dependent binding of aminoacyl-tRNA to the A-site of ribosomes during protein biosynthesis. This Helicosporidium sp. subsp. Simulium jonesii (Green alga) protein is Elongation factor Tu, plastid (tufA).